Reading from the N-terminus, the 150-residue chain is Soluble pyridine nucleotide transhydrogenase (150 aa).

Belongs to the class-I pyridine nucleotide-disulfide oxidoreductase family. The cofactor is FAD.

Its subcellular location is the cytoplasm. The enzyme catalyses NAD(+) + NADPH = NADH + NADP(+). In terms of biological role, conversion of NADPH, generated by peripheral catabolic pathways, to NADH, which can enter the respiratory chain for energy generation. This is Soluble pyridine nucleotide transhydrogenase (sthA) from Pectobacterium carotovorum subsp. carotovorum (Erwinia carotovora subsp. carotovora).